The following is a 207-amino-acid chain: Outer-membrane lipoprotein LolB (207 aa).

The signal sequence occupies residues 1–21 (MPQRKISFYRLLPLATLLLAA). C22 is lipidated: N-palmitoyl cysteine. C22 carries S-diacylglycerol cysteine lipidation.

This sequence belongs to the LolB family. In terms of assembly, monomer.

The protein resides in the cell outer membrane. In terms of biological role, plays a critical role in the incorporation of lipoproteins in the outer membrane after they are released by the LolA protein. This is Outer-membrane lipoprotein LolB from Yersinia enterocolitica serotype O:8 / biotype 1B (strain NCTC 13174 / 8081).